The primary structure comprises 343 residues: Uroporphyrinogen decarboxylase (343 aa).

Substrate-binding positions include 23–27 (RQAGR), aspartate 73, tyrosine 151, serine 206, and histidine 322.

This sequence belongs to the uroporphyrinogen decarboxylase family. Homodimer.

It is found in the cytoplasm. It carries out the reaction uroporphyrinogen III + 4 H(+) = coproporphyrinogen III + 4 CO2. The protein operates within porphyrin-containing compound metabolism; protoporphyrin-IX biosynthesis; coproporphyrinogen-III from 5-aminolevulinate: step 4/4. Its function is as follows. Catalyzes the decarboxylation of four acetate groups of uroporphyrinogen-III to yield coproporphyrinogen-III. The chain is Uroporphyrinogen decarboxylase from Granulibacter bethesdensis (strain ATCC BAA-1260 / CGDNIH1).